The sequence spans 31 residues: Cytochrome b6-f complex subunit 6 (31 aa).

The chain crosses the membrane as a helical span at residues 4 to 24 (VISYLSLLFISFLFALTLFIV).

This sequence belongs to the PetL family. As to quaternary structure, the 4 large subunits of the cytochrome b6-f complex are cytochrome b6, subunit IV (17 kDa polypeptide, PetD), cytochrome f and the Rieske protein, while the 4 small subunits are PetG, PetL, PetM and PetN. The complex functions as a dimer.

It is found in the plastid. The protein resides in the chloroplast thylakoid membrane. In terms of biological role, component of the cytochrome b6-f complex, which mediates electron transfer between photosystem II (PSII) and photosystem I (PSI), cyclic electron flow around PSI, and state transitions. PetL is important for photoautotrophic growth as well as for electron transfer efficiency and stability of the cytochrome b6-f complex. The protein is Cytochrome b6-f complex subunit 6 of Chara vulgaris (Common stonewort).